The primary structure comprises 260 residues: Small ribosomal subunit protein uS2 (260 aa).

Residues 223–260 (EGRQGEDEEEASQEVAEGVSKDSLEDLKKSVEEGSNEE) form a disordered region. A compositionally biased stretch (basic and acidic residues) spans 241 to 254 (VSKDSLEDLKKSVE).

Belongs to the universal ribosomal protein uS2 family.

The protein is Small ribosomal subunit protein uS2 of Pediococcus pentosaceus (strain ATCC 25745 / CCUG 21536 / LMG 10740 / 183-1w).